Reading from the N-terminus, the 575-residue chain is Phosphoenolpyruvate-protein phosphotransferase (575 aa).

The active-site Tele-phosphohistidine intermediate is the His-189. Positions 296 and 332 each coordinate phosphoenolpyruvate. Glu-431 and Asp-455 together coordinate Mg(2+). Residues 454-455 (ND) and Arg-465 each bind phosphoenolpyruvate. The Proton donor role is filled by Cys-502.

The protein belongs to the PEP-utilizing enzyme family. In terms of assembly, homodimer. The cofactor is Mg(2+).

It is found in the cytoplasm. It carries out the reaction L-histidyl-[protein] + phosphoenolpyruvate = N(pros)-phospho-L-histidyl-[protein] + pyruvate. General (non sugar-specific) component of the phosphoenolpyruvate-dependent sugar phosphotransferase system (sugar PTS). This major carbohydrate active-transport system catalyzes the phosphorylation of incoming sugar substrates concomitantly with their translocation across the cell membrane. Enzyme I transfers the phosphoryl group from phosphoenolpyruvate (PEP) to the phosphoryl carrier protein (HPr). The chain is Phosphoenolpyruvate-protein phosphotransferase (ptsI) from Haemophilus influenzae (strain ATCC 51907 / DSM 11121 / KW20 / Rd).